Here is a 1069-residue protein sequence, read N- to C-terminus: Calcium-transporting ATPase 10, plasma membrane-type (1069 aa).

The segment at 1–29 is disordered; it reads MSGQFNNSPRGEDKDVEAGTSSFTEYEDS. Serine 2 carries the post-translational modification N-acetylserine. The Cytoplasmic portion of the chain corresponds to 2 to 180; that stretch reads SGQFNNSPRG…NTYPQKKGRS (179 aa). Positions 42-53 are interaction with calmodulin; that stretch reads ERLRRWRQAALV. A helical membrane pass occupies residues 181 to 201; the sequence is FWRFVWEASQDLTLIILIVAA. Residues 202 to 219 are Lumenal-facing; it reads VASLALGIKTEGIEKGWY. The chain crosses the membrane as a helical span at residues 220–240; the sequence is DGISIAFAVLLVIVVTATSDY. Over 241–369 the chain is Cytoplasmic; that stretch reads RQSLQFQNLN…GGETPLQVRL (129 aa). Residues 370-389 traverse the membrane as a helical segment; sequence NGVATFIGIVGLTVAGVVLF. Over 390-426 the chain is Lumenal; it reads VLVVRYFTGHTKNEQGGPQFIGGKTKFEHVLDDLVEI. Residues 427–444 form a helical membrane-spanning segment; that stretch reads FTVAVTIVVVAVPEGLPL. The Cytoplasmic portion of the chain corresponds to 445–844; the sequence is AVTLTLAYSM…RWGRSVYANI (400 aa). Aspartate 482 serves as the catalytic 4-aspartylphosphate intermediate. The Mg(2+) site is built by aspartate 789 and aspartate 793. Residues 845–863 traverse the membrane as a helical segment; sequence QKFIQFQLTVNVAALVINV. Residues 864 to 874 are Lumenal-facing; it reads VAAISAGEVPL. The helical transmembrane segment at 875-895 threads the bilayer; it reads TAVQLLWVNLIMDTLGALALA. Residues 896–915 are Cytoplasmic-facing; sequence TEPPTDHLMDRAPVGRREPL. A helical transmembrane segment spans residues 916-938; the sequence is ITNIMWRNLFIQAMYQVTVLLIL. The Lumenal portion of the chain corresponds to 939–951; sequence NFRGISILHLKSK. The helical transmembrane segment at 952 to 973 threads the bilayer; it reads PNAERVKNTVIFNAFVICQVFN. Residues 974–991 are Cytoplasmic-facing; that stretch reads EFNARKPDEINIFRGVLR. The helical transmembrane segment at 992–1013 threads the bilayer; sequence NHLFVGIISITIVLQVVIVEFL. At 1014–1023 the chain is on the lumenal side; that stretch reads GTFASTTKLD. The helical transmembrane segment at 1024 to 1045 threads the bilayer; sequence WEMWLVCIGIGSISWPLAVIGK. At 1046–1069 the chain is on the cytoplasmic side; that stretch reads LIPVPETPVSQYFRINRWRRNSSG.

Belongs to the cation transport ATPase (P-type) (TC 3.A.3) family. Type IIB subfamily.

Its subcellular location is the membrane. It catalyses the reaction Ca(2+)(in) + ATP + H2O = Ca(2+)(out) + ADP + phosphate + H(+). With respect to regulation, activated by calmodulin. Its function is as follows. This magnesium-dependent enzyme catalyzes the hydrolysis of ATP coupled with the translocation of calcium from the cytosol into the endoplasmic reticulum. This Arabidopsis thaliana (Mouse-ear cress) protein is Calcium-transporting ATPase 10, plasma membrane-type (ACA10).